The primary structure comprises 400 residues: Tyrosine--tRNA ligase (400 aa).

The short motif at 45-54 (PTAPDLHLGH) is the 'HIGH' region element. The short motif at 230–234 (KMSKS) is the 'KMSKS' region element. Lysine 233 provides a ligand contact to ATP. Residues 339–399 (EWIARVLVIA…GKRRFAKVII (61 aa)) form the S4 RNA-binding domain.

This sequence belongs to the class-I aminoacyl-tRNA synthetase family. TyrS type 2 subfamily. Homodimer.

It is found in the cytoplasm. The catalysed reaction is tRNA(Tyr) + L-tyrosine + ATP = L-tyrosyl-tRNA(Tyr) + AMP + diphosphate + H(+). Its function is as follows. Catalyzes the attachment of tyrosine to tRNA(Tyr) in a two-step reaction: tyrosine is first activated by ATP to form Tyr-AMP and then transferred to the acceptor end of tRNA(Tyr). The polypeptide is Tyrosine--tRNA ligase (Helicobacter hepaticus (strain ATCC 51449 / 3B1)).